The following is a 256-amino-acid chain: Osteocalcin 2 (256 aa).

A signal peptide spans 1-18 (MKTLVLLSICALLSVCWS). The propeptide occupies 19 to 209 (MGAVEPEVVV…LASVLLRRRR (191 aa)). The span at 38 to 186 (AAPADPAAAA…SSSSSSSSES (149 aa)) shows a compositional bias: low complexity. Residues 38–193 (AAPADPAAAA…SESASDEAAK (156 aa)) are disordered. The Gla domain occupies 218-252 (PLQLESLREVCELNIACDEMAETAGIVAAYVAYYG). Positions 222, 226, 229, and 235 each coordinate Ca(2+). E222, E226, and E229 each carry 4-carboxyglutamate. The cysteines at positions 228 and 234 are disulfide-linked. E236 carries the 4-carboxyglutamate modification.

This sequence belongs to the osteocalcin/matrix Gla protein family. Post-translationally, gamma-carboxyglutamate residues are formed by vitamin K dependent carboxylation by GGCX. These residues are essential for the binding of calcium.

It localises to the secreted. The carboxylated form is one of the main organic components of the bone matrix, which constitutes 1-2% of the total bone protein. The carboxylated form binds strongly to apatite and calcium. This Diplodus sargus (White seabream) protein is Osteocalcin 2.